A 117-amino-acid polypeptide reads, in one-letter code: Large ribosomal subunit protein bL20 (117 aa).

It belongs to the bacterial ribosomal protein bL20 family.

Its function is as follows. Binds directly to 23S ribosomal RNA and is necessary for the in vitro assembly process of the 50S ribosomal subunit. It is not involved in the protein synthesizing functions of that subunit. This is Large ribosomal subunit protein bL20 from Mesomycoplasma hyopneumoniae (strain 232) (Mycoplasma hyopneumoniae).